A 1164-amino-acid polypeptide reads, in one-letter code: MKKNTDSEMDQRLGYKFLVPDPKAGVFYRPLHFQYVSYSNFILHRLHEILTVKRPLLSFKNNTERIMIEISNVKVTPPDYSPIIASIKGKSYDALATFTVNIFKEVMTKEGISITKISSYEGKDSHLIKIPLLIGYGNKNPLDTAKYLVPNVIGGVFINKQSVEKVGINLVEKITTWPKFRVVKPNSFTFSFSSVSPPNVLPTRYRHYKISLDISQLEASNISSTKTFITVNIVLLSQYLSRVSLEFIRRSLSYDMPPEVVYLVNAIIDSAKRITESITDFNIDTYINDLVEAEHIKQKSQLTINEFKYEMLHNFLPHMNYTPDQLKGFYMISLLRKFLYCIYHTSRYPDRDSMVCHRILTYGKYFETLAHDELENYIGNIRNDIMNNHKNRGTYAVNIHVLTTPGLNHAFSSLLSGKFKKSDGSYRTHPHYSWMQNISIPRSVGFYPDQVKISKMFSVRKYHPSQYLYFCSSDVPERGPQVGLVSQLSVLSSITNILTSEYLDLEKKICEYIRSYYKDDISYFETGFPITIENALVASLNPNMICDFVTDFRRRKRMGFFGNLEVGITLVRDHMNEIRINIGAGRLVRPFLVVDNGELMMDVCQELESRLDDMTFSDIQKEFPHVIEMVDIEQFTFSNVCESVQKFRMMSKDERKQYDLCDFPAEFRDGYVASSLVGINHNSGPRAILGCAQAKQAISCLSSDIRNKIDNGIHLMYPERPIVISKALETSKIAANCFGQHVTIALMSYKGINQEDGIIIKKQFIQRGGLDIVTAKKHQVEIPLENFNNKERDRSNAYSKLESNGLVRLNAFLESGDAMARNISSRTLEDDFARDNQISFDVSEKYTDMYKSRVERVQVELTDKVKVRVLTMKERRPILGDKFTTRTSQKGTVAYIADETELPYDENGITPDVIINSTSIFSRKTISMLIEVILTAAYSAKPYNNNGENRPVCFPSSNETSIDTYMQFAKQCYEHSNPQLTDDELSDKVFCEKILYDPETDKPYASKVFFGPIYYLRLRHLTQDKATVRCRGKKTKLIRQANEGRKRGGGIKFGEMERDCLIAHGAANTITEVLKDSEEDYQDVYICENCGDIAAQIKGINTCLRCSKLNLSPLLTKIDTTHVSKVFLTQMNARGVKVKLDFERRPPSFYKQLDKVDLKPSFLK.

The protein belongs to the RNA polymerase beta chain family. As to quaternary structure, the DNA-dependent RNA polymerase used for intermediate and late genes expression consists of eight subunits (147) kDa, (133) kDa, (35) kDa, (30) kDa, (22) kDa, (19) kDa, (18) kDa and (7) kDa totalling more than 500 kDa in mass. The same holoenzyme, with the addition of the transcription-specificity factor RAP94, is used for early gene expression.

It localises to the virion. The enzyme catalyses RNA(n) + a ribonucleoside 5'-triphosphate = RNA(n+1) + diphosphate. In terms of biological role, part of the DNA-dependent RNA polymerase which catalyzes the transcription of viral DNA into RNA using the four ribonucleoside triphosphates as substrates. Responsible for the transcription of early, intermediate and late genes. DNA-dependent RNA polymerase associates with the early transcription factor (ETF), itself composed of D6 and A7, thereby allowing the early genes transcription. Late transcription, and probably also intermediate transcription, require newly synthesized RNA polymerase. This chain is DNA-directed RNA polymerase 132 kDa polypeptide (RPO132), found in Mus musculus (Mouse).